A 515-amino-acid polypeptide reads, in one-letter code: Integrator complex subunit 14 (515 aa).

Residues 2-204 enclose the VWFA domain; the sequence is PTVVVMDVSL…KNVQSMFGKL (203 aa). 3 residues coordinate Mg(2+): serine 10, serine 12, and threonine 86. N6-acetyllysine is present on lysine 418.

It belongs to the Integrator subunit 14 family. As to quaternary structure, component of the Integrator complex, composed of core subunits INTS1, INTS2, INTS3, INTS4, INTS5, INTS6, INTS7, INTS8, INTS9/RC74, INTS10, INTS11/CPSF3L, INTS12, INTS13, INTS14 and INTS15. The core complex associates with protein phosphatase 2A subunits PPP2CA and PPP2R1A, to form the Integrator-PP2A (INTAC) complex. INTS14 is part of the tail subcomplex, composed of INTS10, INTS13, INTS14 and INTS15.

It is found in the nucleus. Its function is as follows. Component of the integrator complex, a multiprotein complex that terminates RNA polymerase II (Pol II) transcription in the promoter-proximal region of genes. The integrator complex provides a quality checkpoint during transcription elongation by driving premature transcription termination of transcripts that are unfavorably configured for transcriptional elongation: the complex terminates transcription by (1) catalyzing dephosphorylation of the C-terminal domain (CTD) of Pol II subunit POLR2A/RPB1 and SUPT5H/SPT5, (2) degrading the exiting nascent RNA transcript via endonuclease activity and (3) promoting the release of Pol II from bound DNA. The integrator complex is also involved in terminating the synthesis of non-coding Pol II transcripts, such as enhancer RNAs (eRNAs), small nuclear RNAs (snRNAs), telomerase RNAs and long non-coding RNAs (lncRNAs). Within the integrator complex, INTS14 is part of the integrator tail module that acts as a platform for the recruitment of transcription factors at promoters. The polypeptide is Integrator complex subunit 14 (Rattus norvegicus (Rat)).